An 85-amino-acid polypeptide reads, in one-letter code: CRISPR-associated endoribonuclease Cas2 2 (85 aa).

Mg(2+) is bound at residue Asp-8.

It belongs to the CRISPR-associated endoribonuclease Cas2 protein family. Homodimer, forms a heterotetramer with a Cas1 homodimer. Requires Mg(2+) as cofactor.

CRISPR (clustered regularly interspaced short palindromic repeat), is an adaptive immune system that provides protection against mobile genetic elements (viruses, transposable elements and conjugative plasmids). CRISPR clusters contain sequences complementary to antecedent mobile elements and target invading nucleic acids. CRISPR clusters are transcribed and processed into CRISPR RNA (crRNA). Functions as a ssRNA-specific endoribonuclease. Involved in the integration of spacer DNA into the CRISPR cassette. The sequence is that of CRISPR-associated endoribonuclease Cas2 2 from Chloroflexus aurantiacus (strain ATCC 29366 / DSM 635 / J-10-fl).